The primary structure comprises 337 residues: Homeobox protein knotted-1-like 4 (337 aa).

Disordered regions lie at residues 1-56 (MEQQ…SFHE) and 159-190 (FTLD…GLPE). Positions 27–38 (PTSTSTSPAVPS) are enriched in low complexity. An ELK domain is found at 200-220 (ELKSHLLNKYSGYLSSLWREL). Residues 221-284 (SKKKKKGKLP…NQRKRHWKPT (64 aa)) constitute a DNA-binding region (homeobox; TALE-type).

The protein belongs to the TALE/KNOX homeobox family.

The protein resides in the nucleus. The chain is Homeobox protein knotted-1-like 4 (OSH10) from Oryza sativa subsp. japonica (Rice).